We begin with the raw amino-acid sequence, 264 residues long: Thymidylate synthase (264 aa).

Arg-21 contacts dUMP. His-51 is a binding site for (6R)-5,10-methylene-5,6,7,8-tetrahydrofolate. 126 to 127 serves as a coordination point for dUMP; it reads RR. Cys-146 acts as the Nucleophile in catalysis. DUMP is bound by residues 166–169, Asn-177, and 207–209; these read RSCD and HLY. Residue Asp-169 participates in (6R)-5,10-methylene-5,6,7,8-tetrahydrofolate binding. (6R)-5,10-methylene-5,6,7,8-tetrahydrofolate is bound at residue Ala-263.

It belongs to the thymidylate synthase family. Bacterial-type ThyA subfamily. Homodimer.

The protein localises to the cytoplasm. The enzyme catalyses dUMP + (6R)-5,10-methylene-5,6,7,8-tetrahydrofolate = 7,8-dihydrofolate + dTMP. Its pathway is pyrimidine metabolism; dTTP biosynthesis. Catalyzes the reductive methylation of 2'-deoxyuridine-5'-monophosphate (dUMP) to 2'-deoxythymidine-5'-monophosphate (dTMP) while utilizing 5,10-methylenetetrahydrofolate (mTHF) as the methyl donor and reductant in the reaction, yielding dihydrofolate (DHF) as a by-product. This enzymatic reaction provides an intracellular de novo source of dTMP, an essential precursor for DNA biosynthesis. The chain is Thymidylate synthase from Pectobacterium atrosepticum (strain SCRI 1043 / ATCC BAA-672) (Erwinia carotovora subsp. atroseptica).